We begin with the raw amino-acid sequence, 72 residues long: MKKILFSMFYSILVGEEPDSVFLKKEGKQNQVKMIWVAPSSCAKDLTISEGTGATFLFNFHSRVSICFHALF.

The protein belongs to the ycf76 family.

The protein resides in the plastid. Its subcellular location is the chloroplast. This is an uncharacterized protein from Oryza nivara (Indian wild rice).